Reading from the N-terminus, the 98-residue chain is Small ribosomal subunit protein bS20 (98 aa).

It belongs to the bacterial ribosomal protein bS20 family.

Functionally, binds directly to 16S ribosomal RNA. This Prochlorococcus marinus (strain NATL1A) protein is Small ribosomal subunit protein bS20.